Reading from the N-terminus, the 111-residue chain is uncharacterized protein (111 aa).

This is an uncharacterized protein from Caenorhabditis elegans.